We begin with the raw amino-acid sequence, 673 residues long: RAS guanyl-releasing protein 4 (673 aa).

2 stretches are compositionally biased toward basic residues: residues 1-10 (MNRKDIKRKS) and 20-32 (GRGR…RHKT). 2 disordered regions span residues 1 to 34 (MNRK…KTCP) and 164 to 188 (LGDA…PGLG). In terms of domain architecture, N-terminal Ras-GEF spans 49 to 175 (GVLSESSCSE…DASSLLSPGG (127 aa)). A compositionally biased stretch (low complexity) spans 164-173 (LGDASSLLSP). The Ras-GEF domain maps to 201–432 (ETEELAQHLT…YELSYAREPR (232 aa)). An EF-hand domain is found at 466 to 501 (HVEQLVESVFKNYDPEGRGSISLEDFERLSGNFPFA). The Phorbol-ester/DAG-type zinc-finger motif lies at 540 to 590 (LHAFQEVTFRKPTFCHSCSGFLWGVTKQGYRCRDCGLCCHRHCRDQVRVEC). The segment at 592–633 (KRPETKGDPGPPGAPVPATSLPPANCGSEESLSYTLSPDPES) is disordered.

Belongs to the RASGRP family. In terms of tissue distribution, expressed by mast cells and their progenitors (at protein level). Expressed by dendritic cells. As to expression, expressed in neutrophils.

Its subcellular location is the cytoplasm. It localises to the cell membrane. Its function is as follows. Functions as a cation- and diacylglycerol (DAG)-regulated nucleotide exchange factor activating Ras through the exchange of bound GDP for GTP. In neutrophils, participates in a phospholipase C-activating N-formyl peptide-activated GPCR (G protein-coupled receptor) signaling pathway by promoting Ras-mediated activation of PIK3CG/PI3Kgamma to promote neutrophil functional responses. In CD117(+) dendritic cells and mast cells, participates in an lipopolysaccharide (LPS)-activated signaling pathway that stimulates the production of interferon-gamma and other pro-inflammatory cytokines by natural killer (NK) cells. May function in mast cell differentiation. Does not appear to be required for the development of B-cells, DC-cells, T-cells, or NK-cells. In terms of biological role, binds diacylglycerol (DAG). Functionally, unable to bind diacylglycerol (DAG). This Mus musculus (Mouse) protein is RAS guanyl-releasing protein 4 (Rasgrp4).